Consider the following 419-residue polypeptide: Transcription factor 7 (419 aa).

Residues 1–12 (MPQLDSGGGGAG) are compositionally biased toward gly residues. The segment at 1–60 (MPQLDSGGGGAGRGDDLGAPDELLAFQDEGEEQDDKNRDSPVGPERDLAELKSSLVNESE) is CTNNB1-binding. Disordered regions lie at residues 1-111 (MPQL…LKAP) and 134-200 (PASG…SGFY). Basic and acidic residues-rich tracts occupy residues 35–50 (DKNR…DLAE) and 86–109 (LGRE…DGLK). Residues 143 to 158 (QPQPPLHNKPGQPPHG) show a composition bias toward pro residues. Positions 304 to 372 (IKKPLNAFML…LHMQLYPGWS (69 aa)) form a DNA-binding region, HMG box. Positions 374–406 (RDNYGKKKRRSREKHQESTTGGKRNAFGTYPEK) are disordered. The short motif at 379–385 (KKKRRSR) is the Nuclear localization signal element.

It belongs to the TCF/LEF family. Binds the armadillo repeat of CTNNB1 and forms a stable complex. Binds TLE5, TLE1, TLE2, TLE3 and TLE4. Interacts with MLLT11. Interacts with DAZAP2. As to quaternary structure, interacts (via N-terminus) with SOX13; inhibits WNT-mediated transcriptional activity. In terms of tissue distribution, T-cell specific. Expressed in triple negative 2 subpopulations of T-cells and both the gamma-delta and alpha-beta T-cell lineages. Expressed in Il7 receptor positive innate-like T-cells in the mesenteric lymph nodes and spleen (at protein level).

The protein localises to the nucleus. Transcriptional activator involved in T-cell lymphocyte differentiation. Necessary for the survival of CD4(+) CD8(+) immature thymocytes. Isoforms lacking the N-terminal CTNNB1 binding domain cannot fulfill this role. Binds to the T-lymphocyte-specific enhancer element (5'-WWCAAAG-3') found in the promoter of the CD3E gene. Represses expression of the T-cell receptor gamma gene in alpha-beta T-cell lineages. Inhibits the developmental program of IL17A effector gamma-delta T-cell subsets via regulating the transcription of T-cell lineage effector proteins. Required for the development of natural killer receptor-positive lymphoid tissue inducer T-cells. TLE1, TLE2, TLE3 and TLE4 repress transactivation mediated by TCF7 and CTNNB1. May also act as feedback transcriptional repressor of CTNNB1 and TCF7L2 target genes. The polypeptide is Transcription factor 7 (Mus musculus (Mouse)).